A 177-amino-acid chain; its full sequence is UPF0102 protein BPP4042 (177 aa).

A disordered region spans residues 13–43 (AAQAQRRLHRRPPASPRASPGARDGGSPTQR).

The protein belongs to the UPF0102 family.

The protein is UPF0102 protein BPP4042 of Bordetella parapertussis (strain 12822 / ATCC BAA-587 / NCTC 13253).